A 165-amino-acid polypeptide reads, in one-letter code: Lipoprotein signal peptidase (165 aa).

2 helical membrane passes run 66 to 86 and 91 to 111; these read WQFW…LSLT and NEPV…GNLV. Catalysis depends on residues Asp-121 and Asp-139. The helical transmembrane segment at 132-152 threads the bilayer; the sequence is WPAFNVADIAICIGAFLAFVA.

The protein belongs to the peptidase A8 family.

Its subcellular location is the cell inner membrane. The catalysed reaction is Release of signal peptides from bacterial membrane prolipoproteins. Hydrolyzes -Xaa-Yaa-Zaa-|-(S,diacylglyceryl)Cys-, in which Xaa is hydrophobic (preferably Leu), and Yaa (Ala or Ser) and Zaa (Gly or Ala) have small, neutral side chains.. It functions in the pathway protein modification; lipoprotein biosynthesis (signal peptide cleavage). Functionally, this protein specifically catalyzes the removal of signal peptides from prolipoproteins. The polypeptide is Lipoprotein signal peptidase (Nitratidesulfovibrio vulgaris (strain DP4) (Desulfovibrio vulgaris)).